The following is a 154-amino-acid chain: Protein X (154 aa).

Residues 68-117 (PCALRFTSARCMETTVNAHQILPKVLHKRTLGLPAMSTTDLEAYFKDCVF) form a mitochondrial targeting sequence region.

This sequence belongs to the orthohepadnavirus protein X family. May form homodimer. May interact with host CEBPA, CFLAR, CREB1, DDB1, E4F1, HBXIP, HSPD1/HSP60, NFKBIA, POLR2E and SMAD4. Interacts with host SMC5-SMC6 complex and induces its degradation. Interacts with host TRPC4AP; leading to prevent ubiquitination of TRPC4AP. Interacts with host PLSCR1; this interaction promotes ubiquitination and degradation of HBx and impairs HBx-mediated cell proliferation. A fraction may be phosphorylated in insect cells and HepG2 cells, a human hepatoblastoma cell line. Phosphorylated in vitro by host protein kinase C or mitogen-activated protein kinase. N-acetylated in insect cells.

It is found in the host cytoplasm. It localises to the host nucleus. The protein resides in the host mitochondrion. In terms of biological role, multifunctional protein that plays a role in silencing host antiviral defenses and promoting viral transcription. Does not seem to be essential for HBV infection. May be directly involved in development of cirrhosis and liver cancer (hepatocellular carcinoma). Most of cytosolic activities involve modulation of cytosolic calcium. The effect on apoptosis is controversial depending on the cell types in which the studies have been conducted. May induce apoptosis by localizing in mitochondria and causing loss of mitochondrial membrane potential. May also modulate apoptosis by binding host CFLAR, a key regulator of the death-inducing signaling complex (DISC). Promotes viral transcription by using the host E3 ubiquitin ligase DDB1 to target the SMC5-SMC6 complex to proteasomal degradation. This host complex would otherwise bind to viral episomal DNA, and prevents its transcription. Moderately stimulates transcription of many different viral and cellular transcription elements. Promoters and enhancers stimulated by HBx contain DNA binding sites for NF-kappa-B, AP-1, AP-2, c-EBP, ATF/CREB, or the calcium-activated factor NF-AT. The chain is Protein X from Homo sapiens (Human).